Reading from the N-terminus, the 320-residue chain is Zona pellucida-binding protein 1 (320 aa).

N-linked (GlcNAc...) asparagine glycans are attached at residues N85 and N158.

Belongs to the zona pellucida-binding protein Sp38 family.

The protein localises to the cytoplasmic vesicle. It localises to the secretory vesicle. Its subcellular location is the acrosome. The protein resides in the secreted. It is found in the acrosome membrane. Plays a role in sperm morphogenesis and in sperm-oocyte interaction during fertilization. This Gallus gallus (Chicken) protein is Zona pellucida-binding protein 1 (ZPBP1).